The chain runs to 429 residues: Glutamyl-tRNA reductase (429 aa).

Substrate-binding positions include 49 to 52, serine 107, 112 to 114, and glutamine 118; these read TCNR and EPQ. Cysteine 50 (nucleophile) is an active-site residue. 187 to 192 contributes to the NADP(+) binding site; the sequence is GAGKTI.

This sequence belongs to the glutamyl-tRNA reductase family. In terms of assembly, homodimer.

The enzyme catalyses (S)-4-amino-5-oxopentanoate + tRNA(Glu) + NADP(+) = L-glutamyl-tRNA(Glu) + NADPH + H(+). It functions in the pathway porphyrin-containing compound metabolism; protoporphyrin-IX biosynthesis; 5-aminolevulinate from L-glutamyl-tRNA(Glu): step 1/2. Its function is as follows. Catalyzes the NADPH-dependent reduction of glutamyl-tRNA(Glu) to glutamate 1-semialdehyde (GSA). The sequence is that of Glutamyl-tRNA reductase from Marinobacter nauticus (strain ATCC 700491 / DSM 11845 / VT8) (Marinobacter aquaeolei).